Here is a 376-residue protein sequence, read N- to C-terminus: N,N'-diacetylbacillosaminyl-diphospho-undecaprenol alpha-1,3-N-acetylgalactosaminyltransferase (376 aa).

Belongs to the glycosyltransferase group 1 family.

The catalysed reaction is N,N'-diacetyl-alpha-D-bacillosaminyl-tri-trans,hepta-cis-undecaprenyl diphosphate + UDP-N-acetyl-alpha-D-galactosamine = N-acetyl-alpha-D-galactosaminyl-(1-&gt;3)-N,N'-diacetyl-alpha-D-bacillosaminyl-tri-trans,hepta-cis-undecaprenyl diphosphate + UDP + H(+). It functions in the pathway protein modification; protein glycosylation. In terms of biological role, adds the first GalNAc residue on to the isoprenoid-linked bacillosamine (2,4-diacetamido-2,4,6-trideoxyglucose) carrier in the N-linked protein glycosylation pathway. Acts first on the undecaprenylpyrophosphate-linked bacillosamine (Und-PP-Bac) substrate to yield the disaccharide. This is N,N'-diacetylbacillosaminyl-diphospho-undecaprenol alpha-1,3-N-acetylgalactosaminyltransferase (pglA) from Campylobacter jejuni subsp. jejuni serotype O:2 (strain ATCC 700819 / NCTC 11168).